A 540-amino-acid polypeptide reads, in one-letter code: Phosphoenolpyruvate carboxykinase (ATP) (540 aa).

R65 contacts substrate. Position 87 is an N6-acetyllysine (K87). Residues Y207 and K213 each contribute to the substrate site. ATP contacts are provided by residues K213, H232, and 248 to 256 (GLSGTGKTT). K213 and H232 together coordinate Mn(2+). D269 lines the Mn(2+) pocket. Residues E297, R333, 449-450 (RI), and T455 each bind ATP. R333 contacts substrate. The residue at position 523 (K523) is an N6-acetyllysine.

This sequence belongs to the phosphoenolpyruvate carboxykinase (ATP) family. As to quaternary structure, monomer. The cofactor is Mn(2+).

It is found in the cytoplasm. It catalyses the reaction oxaloacetate + ATP = phosphoenolpyruvate + ADP + CO2. The protein operates within carbohydrate biosynthesis; gluconeogenesis. In terms of biological role, involved in the gluconeogenesis. Catalyzes the conversion of oxaloacetate (OAA) to phosphoenolpyruvate (PEP) through direct phosphoryl transfer between the nucleoside triphosphate and OAA. The chain is Phosphoenolpyruvate carboxykinase (ATP) from Shigella flexneri serotype 5b (strain 8401).